The chain runs to 97 residues: C-C motif chemokine 7 (97 aa).

An N-terminal signal peptide occupies residues 1–23 (MQISAALLCVLLTAAAFTVHVWA). Pyrrolidone carboxylic acid is present on glutamine 24. Asparagine 29 is a glycosylation site (N-linked (GlcNAc...) asparagine). Disulfide bonds link cysteine 33/cysteine 57 and cysteine 34/cysteine 73.

This sequence belongs to the intercrine beta (chemokine CC) family. As to quaternary structure, monomer. Interacts with TNFAIP6 (via Link domain).

Its subcellular location is the secreted. Functionally, chemotactic factor that attracts monocytes and eosinophils, but not neutrophils. Augments monocyte anti-tumor activity. The protein is C-C motif chemokine 7 (Ccl7) of Rattus norvegicus (Rat).